A 151-amino-acid polypeptide reads, in one-letter code: Small ribosomal subunit protein uS15z (151 aa).

This sequence belongs to the universal ribosomal protein uS15 family.

This is Small ribosomal subunit protein uS15z (RPS13A) from Arabidopsis thaliana (Mouse-ear cress).